The chain runs to 157 residues: Ribosome maturation factor RimP (157 aa).

The protein belongs to the RimP family.

It localises to the cytoplasm. Required for maturation of 30S ribosomal subunits. The protein is Ribosome maturation factor RimP of Levilactobacillus brevis (strain ATCC 367 / BCRC 12310 / CIP 105137 / JCM 1170 / LMG 11437 / NCIMB 947 / NCTC 947) (Lactobacillus brevis).